The primary structure comprises 337 residues: Receptor like protein kinase S.3 (337 aa).

The Protein kinase domain maps to 50–316 (FKESELFGTE…VNYLEGNDVL (267 aa)). Residues 56–64 (FGTEANGTV) and K78 each bind ATP. Residue Y123 is modified to Phosphotyrosine. Catalysis depends on D171, which acts as the Proton acceptor.

The protein belongs to the protein kinase superfamily. Ser/Thr protein kinase family.

The enzyme catalyses L-seryl-[protein] + ATP = O-phospho-L-seryl-[protein] + ADP + H(+). The catalysed reaction is L-threonyl-[protein] + ATP = O-phospho-L-threonyl-[protein] + ADP + H(+). In Arabidopsis thaliana (Mouse-ear cress), this protein is Receptor like protein kinase S.3 (LECRKS3).